Here is a 407-residue protein sequence, read N- to C-terminus: Tyrosine--tRNA ligase 1 (407 aa).

Tyr-35 is a binding site for L-tyrosine. A 'HIGH' region motif is present at residues 40 to 49 (PTGDSLHVGH). Residues Tyr-168 and Gln-172 each coordinate L-tyrosine. The 'KMSKS' region motif lies at 228–232 (KMGKT). Lys-231 serves as a coordination point for ATP. The S4 RNA-binding domain occupies 340-406 (SSILDVLVHT…GKKKYYKIVI (67 aa)).

Belongs to the class-I aminoacyl-tRNA synthetase family. TyrS type 1 subfamily. In terms of assembly, homodimer.

The protein resides in the cytoplasm. The enzyme catalyses tRNA(Tyr) + L-tyrosine + ATP = L-tyrosyl-tRNA(Tyr) + AMP + diphosphate + H(+). Functionally, catalyzes the attachment of tyrosine to tRNA(Tyr) in a two-step reaction: tyrosine is first activated by ATP to form Tyr-AMP and then transferred to the acceptor end of tRNA(Tyr). The protein is Tyrosine--tRNA ligase 1 of Clostridium acetobutylicum (strain ATCC 824 / DSM 792 / JCM 1419 / IAM 19013 / LMG 5710 / NBRC 13948 / NRRL B-527 / VKM B-1787 / 2291 / W).